The sequence spans 179 residues: Large ribosomal subunit protein uL6 (179 aa).

It belongs to the universal ribosomal protein uL6 family. Part of the 50S ribosomal subunit.

In terms of biological role, this protein binds to the 23S rRNA, and is important in its secondary structure. It is located near the subunit interface in the base of the L7/L12 stalk, and near the tRNA binding site of the peptidyltransferase center. The chain is Large ribosomal subunit protein uL6 from Streptomyces griseus subsp. griseus (strain JCM 4626 / CBS 651.72 / NBRC 13350 / KCC S-0626 / ISP 5235).